The following is an 884-amino-acid chain: Pyruvate, phosphate dikinase (884 aa).

The tract at residues 1-351 (MSTRRVYFFG…LWMLQARAGK (351 aa)) is N-terminal. Arg99 is a binding site for ATP. Positions 352–408 (RTGFAMVRIAIDMCKEGMLTEEEALLRIDANKINEFLFKRFDPSVKPVVLGKGIPAS) are linker 1. Residues 409 to 507 (PGAAVGVICF…KFKEGDFISI (99 aa)) are central. Thr462 bears the Phosphothreonine; by PDRP1 mark. Catalysis depends on His464, which acts as the Tele-phosphohistidine intermediate. The interval 508 to 542 (NGTTGEIYNGAVQTIEPGITDDLQTIMDWSDKYRV) is linker 2. The interval 543-884 (LKIRTNADTP…IAAIKARTNQ (342 aa)) is C-terminal. Positions 570, 626, 753, 774, 775, 776, and 777 each coordinate substrate. Glu753 provides a ligand contact to Mg(2+). Asp777 contributes to the Mg(2+) binding site. Cys839 serves as the catalytic Proton donor.

It belongs to the PEP-utilizing enzyme family. As to quaternary structure, homodimer. Requires Mg(2+) as cofactor. Post-translationally, phosphorylation of Thr-462 in the dark inactivates the enzyme. Dephosphorylation upon light stimulation reactivates the enzyme.

The catalysed reaction is pyruvate + phosphate + ATP = phosphoenolpyruvate + AMP + diphosphate + H(+). Its activity is regulated as follows. Activated by light-induced dephosphorylation. Inhibited by dark-induced phosphorylation. Both reactions are catalyzed by PDRP1. Functionally, catalyzes the reversible phosphorylation of pyruvate and phosphate. The sequence is that of Pyruvate, phosphate dikinase from Giardia intestinalis (Giardia lamblia).